The chain runs to 447 residues: Tubulin beta-1 chain (447 aa).

GTP contacts are provided by Q11, E69, S138, G142, T143, G144, N204, and N226. E69 lines the Mg(2+) pocket. Over residues 411–427 (AESNMNDLVSEYQQYQD) the composition is skewed to polar residues. Positions 411-447 (AESNMNDLVSEYQQYQDATADEEGDYEDEEEQVPEDE) are disordered. Residues 429-447 (TADEEGDYEDEEEQVPEDE) show a composition bias toward acidic residues.

It belongs to the tubulin family. In terms of assembly, dimer of alpha and beta chains. A typical microtubule is a hollow water-filled tube with an outer diameter of 25 nm and an inner diameter of 15 nM. Alpha-beta heterodimers associate head-to-tail to form protofilaments running lengthwise along the microtubule wall with the beta-tubulin subunit facing the microtubule plus end conferring a structural polarity. Microtubules usually have 13 protofilaments but different protofilament numbers can be found in some organisms and specialized cells. Requires Mg(2+) as cofactor. As to expression, expressed in leaf sheaths.

Its subcellular location is the cytoplasm. It is found in the cytoskeleton. In terms of biological role, tubulin is the major constituent of microtubules, a cylinder consisting of laterally associated linear protofilaments composed of alpha- and beta-tubulin heterodimers. Microtubules grow by the addition of GTP-tubulin dimers to the microtubule end, where a stabilizing cap forms. Below the cap, tubulin dimers are in GDP-bound state, owing to GTPase activity of alpha-tubulin. The chain is Tubulin beta-1 chain (TUBB1) from Oryza sativa subsp. japonica (Rice).